A 791-amino-acid polypeptide reads, in one-letter code: Protein Rf1, mitochondrial (791 aa).

The N-terminal 27 residues, 1–27 (MARRAASRAVGALRSDGSIQGRGGRAG), are a transit peptide targeting the mitochondrion. Residues 1–31 (MARRAASRAVGALRSDGSIQGRGGRAGGSGA) form a disordered region. Residues 20-30 (QGRGGRAGGSG) show a composition bias toward gly residues. PPR repeat units lie at residues 86 to 120 (DLCT…GFRV), 121 to 156 (DAIA…GCIP), 157 to 194 (NVFS…GSPP), 195 to 229 (DVVS…GILP), 230 to 264 (DVVT…GVMP), 265 to 299 (DCMT…GVEP), 300 to 334 (DVVT…GLKP), 335 to 369 (EITT…GIHP), 370 to 404 (DHYV…GLNP), 405 to 439 (NAVT…GLSP), 440 to 474 (GNIV…GICL), 475 to 509 (NTIF…GVKP), 510 to 544 (NVIT…GLKP), 545 to 579 (NTVT…GVSP), 580 to 614 (DIIT…GTQI), 615 to 649 (ELST…DLKL), 650 to 684 (EART…GLVP), 685 to 719 (NYWT…GCTV), and 720 to 754 (DSGM…HFSL).

It is found in the mitochondrion. Reduces the expression of the cytoplasmic male sterility (CMS)-associated mitochondrial gene ORF79, encoding a cytotoxic peptide. Can restore male fertility by blocking ORF79 production via endonucleolytic cleavage of dicistronic ATP6/ORF79 mRNA. Promotes the editing of ATP6 mRNAs independently of its cleavage function. The chain is Protein Rf1, mitochondrial (Rf1) from Oryza sativa subsp. indica (Rice).